Reading from the N-terminus, the 482-residue chain is Major cardiolipin synthase ClsA (482 aa).

Helical transmembrane passes span 3–23 (ISSILLSLFFILNILLAIIVI) and 34–54 (WAWLLVLFFIPVLGFILYLLF). PLD phosphodiesterase domains follow at residues 217 to 244 (LNYRNHRKLVIIDGMTGYVGGFNVGDEY) and 395 to 422 (DNGFIHAKTIVVDDEIASVGTANIDVRS). Residues H222, K224, D229, H400, K402, and D407 contribute to the active site.

It belongs to the phospholipase D family. Cardiolipin synthase subfamily.

Its subcellular location is the cell membrane. It carries out the reaction 2 a 1,2-diacyl-sn-glycero-3-phospho-(1'-sn-glycerol) = a cardiolipin + glycerol. Its function is as follows. Catalyzes the reversible phosphatidyl group transfer from one phosphatidylglycerol molecule to another to form cardiolipin (CL) (diphosphatidylglycerol) and glycerol. The polypeptide is Major cardiolipin synthase ClsA (clsA) (Bacillus subtilis (strain 168)).